We begin with the raw amino-acid sequence, 161 residues long: Disulfide bond formation protein B (161 aa).

The Cytoplasmic portion of the chain corresponds to 1-8 (MQANSRTY). A helical transmembrane segment spans residues 9 to 25 (FLLIAIVSFAMVGAALY). Over 26 to 43 (MQYAENLQPCPLCIMQRF) the chain is Periplasmic. A disulfide bridge links C35 with C38. A helical transmembrane segment spans residues 44-58 (AFIGIGIFSLLAVIA). The Cytoplasmic portion of the chain corresponds to 59–63 (QNTRT). A helical membrane pass occupies residues 64-81 (LWQGLGMLSGVGGIAVAG). The Periplasmic segment spans residues 82 to 136 (YQVALLMNPKASCGIDPLENWVNSLPTAKLLPQVFYSDGLCTAPTPPILGLSIPA). C94 and C122 are disulfide-bonded. A helical membrane pass occupies residues 137–155 (WSLIWLLILTLTLAVGLIR). Topologically, residues 156-161 (REKHFR) are cytoplasmic.

Belongs to the DsbB family.

The protein resides in the cell inner membrane. Required for disulfide bond formation in some periplasmic proteins. Acts by oxidizing the DsbA protein. The sequence is that of Disulfide bond formation protein B from Cupriavidus metallidurans (strain ATCC 43123 / DSM 2839 / NBRC 102507 / CH34) (Ralstonia metallidurans).